Reading from the N-terminus, the 780-residue chain is LPS-assembly protein LptD (780 aa).

A signal peptide spans 1–24 (MKKRLPTLLASLIGSALYSQQALA).

This sequence belongs to the LptD family. In terms of assembly, component of the lipopolysaccharide transport and assembly complex. Interacts with LptE and LptA.

The protein resides in the cell outer membrane. Together with LptE, is involved in the assembly of lipopolysaccharide (LPS) at the surface of the outer membrane. This chain is LPS-assembly protein LptD, found in Sodalis glossinidius (strain morsitans).